Consider the following 1235-residue polypeptide: Structural maintenance of chromosomes protein 1B (1235 aa).

An ATP-binding site is contributed by 32-39 (GPNGSGKS). Residues 156–490 (EEISTSGELI…RSELQNAGID (335 aa)) adopt a coiled-coil conformation. One can recognise an SMC hinge domain in the interval 514–629 (SVFGRLFDLC…ETMEEARHIA (116 aa)). N6-acetyllysine is present on residues lysine 648 and lysine 713. Coiled-coil stretches lie at residues 666 to 934 (WDEK…LDCK), 970 to 994 (EKEE…SDQE), and 1022 to 1049 (RALE…KEAR). Position 1033 is an N6-acetyllysine (lysine 1033).

Belongs to the SMC family. SMC1 subfamily. Forms a heterodimer with SMC3. Component of a meiosis-specific cohesin complex, probably composed of the SMC1B and SMC3 heterodimer attached via their SMC hinge domain, RAD21 (or its meiosis-specific related protein REC8), which link them, and STAG3, which interacts with RAD21 or REC8. The cohesin complex interacts with the cohesin loading complex subunits NIPBL/Scc2 (via HEAT repeats) and MAU2/Scc4. NIPBL directly contacts all members of the complex, RAD21, SMC1A/B, SMC3 and STAG1.

The protein localises to the nucleus. It localises to the chromosome. The protein resides in the centromere. Meiosis-specific component of cohesin complex. Required for the maintenance of meiotic cohesion, but not, or only to a minor extent, for its establishment. Contributes to axial element (AE) formation and the organization of chromatin loops along the AE. Plays a key role in synapsis, recombination and chromosome movements. The cohesin complex is required for the cohesion of sister chromatids after DNA replication. The cohesin complex apparently forms a large proteinaceous ring within which sister chromatids can be trapped. At anaphase, the complex is cleaved and dissociates from chromatin, allowing sister chromatids to segregate. The meiosis-specific cohesin complex probably replaces mitosis specific cohesin complex when it dissociates from chromatin during prophase I. This chain is Structural maintenance of chromosomes protein 1B (SMC1B), found in Homo sapiens (Human).